The primary structure comprises 396 residues: Elongation factor Tu 2 (396 aa).

Positions 10–206 (KPHINVGTIG…AMDAHIPQPE (197 aa)) constitute a tr-type G domain. Positions 19-26 (GHVDHGKT) are G1. 19 to 26 (GHVDHGKT) contacts GTP. Thr26 is a Mg(2+) binding site. The G2 stretch occupies residues 60–64 (GITIA). Residues 81 to 84 (DCPG) form a G3 region. Residues 81–85 (DCPGH) and 136–139 (NKAD) each bind GTP. A G4 region spans residues 136 to 139 (NKAD). The tract at residues 174–176 (SAL) is G5.

Belongs to the TRAFAC class translation factor GTPase superfamily. Classic translation factor GTPase family. EF-Tu/EF-1A subfamily. In terms of assembly, monomer.

The protein resides in the cytoplasm. It carries out the reaction GTP + H2O = GDP + phosphate + H(+). Functionally, GTP hydrolase that promotes the GTP-dependent binding of aminoacyl-tRNA to the A-site of ribosomes during protein biosynthesis. In Halorhodospira halophila (strain DSM 244 / SL1) (Ectothiorhodospira halophila (strain DSM 244 / SL1)), this protein is Elongation factor Tu 2.